Consider the following 101-residue polypeptide: DNA-binding protein HU (101 aa).

The protein belongs to the bacterial histone-like protein family. As to quaternary structure, homodimer.

Functionally, histone-like DNA-binding protein which is capable of wrapping DNA to stabilize it, and thus to prevent its denaturation under extreme environmental conditions. This Rickettsia bellii (strain RML369-C) protein is DNA-binding protein HU (hup).